The sequence spans 487 residues: mRNA cleavage and polyadenylation factor CLP1 (487 aa).

Residues glutamate 19, lysine 59, and 134 to 139 each bind ATP; that span reads NSGKTT.

It belongs to the Clp1 family. Clp1 subfamily. In terms of assembly, component of a pre-mRNA cleavage factor complex. Interacts directly with PCF11.

It localises to the nucleus. Its function is as follows. Required for endonucleolytic cleavage during polyadenylation-dependent pre-mRNA 3'-end formation. The sequence is that of mRNA cleavage and polyadenylation factor CLP1 from Laccaria bicolor (strain S238N-H82 / ATCC MYA-4686) (Bicoloured deceiver).